The following is a 188-amino-acid chain: Probable manganese efflux pump MntP (188 aa).

Transmembrane regions (helical) follow at residues 3 to 23, 41 to 61, 66 to 86, 106 to 128, 143 to 163, and 168 to 188; these read FTAT…ASIG, LIFG…GILA, LEWN…RMII, WLLV…GLAF, ATLI…PMLG, and ILGG…HFHG.

The protein belongs to the MntP (TC 9.B.29) family.

The protein localises to the cell inner membrane. In terms of biological role, probably functions as a manganese efflux pump. This chain is Probable manganese efflux pump MntP, found in Salmonella typhimurium (strain LT2 / SGSC1412 / ATCC 700720).